The following is a 736-amino-acid chain: Prolyl oligopeptidase dbiP (736 aa).

Residues S572, D656, and H692 each act as charge relay system in the active site.

Belongs to the peptidase S9A family. Monomer.

It carries out the reaction Hydrolysis of Pro-|-Xaa &gt;&gt; Ala-|-Xaa in oligopeptides.. It functions in the pathway mycotoxin biosynthesis. Its function is as follows. Prolyl oligopeptidase; part of the gene cluster that mediates the biosynthesis of dendrothelin A, a highly methylated cyclic dodecapeptide showing slight nematodicidal activity. Excises and catalyzes the macrocyclization of the methylated core peptide of dbiMA to yield dendrothelin A. DbiP works in a two-step fashion with an initial cleavage at the N-terminus, followed by a second cleavage at the C-terminus of the core peptide. According to this mechanism, the free N-terminus of the core peptide, generated by the first cleavage, attacks the covalent intermediate of the second cleavage, which results in macrocyclization of the core peptide. The polypeptide is Prolyl oligopeptidase dbiP (Dendrothele bispora (strain CBS 962.96)).